A 193-amino-acid polypeptide reads, in one-letter code: Segregation and condensation protein B (193 aa).

It belongs to the ScpB family. As to quaternary structure, homodimer. Homodimerization may be required to stabilize the binding of ScpA to the Smc head domains. Component of a cohesin-like complex composed of ScpA, ScpB and the Smc homodimer, in which ScpA and ScpB bind to the head domain of Smc. The presence of the three proteins is required for the association of the complex with DNA.

The protein resides in the cytoplasm. Participates in chromosomal partition during cell division. May act via the formation of a condensin-like complex containing Smc and ScpA that pull DNA away from mid-cell into both cell halves. The chain is Segregation and condensation protein B from Shouchella clausii (strain KSM-K16) (Alkalihalobacillus clausii).